We begin with the raw amino-acid sequence, 439 residues long: ATP-dependent protease ATPase subunit HslU (439 aa).

Residues Ile-17, 59-64, Asp-251, Glu-317, and Arg-389 contribute to the ATP site; that span reads GVGKTE.

This sequence belongs to the ClpX chaperone family. HslU subfamily. As to quaternary structure, a double ring-shaped homohexamer of HslV is capped on each side by a ring-shaped HslU homohexamer. The assembly of the HslU/HslV complex is dependent on binding of ATP.

The protein resides in the cytoplasm. Functionally, ATPase subunit of a proteasome-like degradation complex; this subunit has chaperone activity. The binding of ATP and its subsequent hydrolysis by HslU are essential for unfolding of protein substrates subsequently hydrolyzed by HslV. HslU recognizes the N-terminal part of its protein substrates and unfolds these before they are guided to HslV for hydrolysis. The chain is ATP-dependent protease ATPase subunit HslU from Campylobacter jejuni subsp. jejuni serotype O:6 (strain 81116 / NCTC 11828).